The following is a 122-amino-acid chain: Large ribosomal subunit protein uL14 (122 aa).

Belongs to the universal ribosomal protein uL14 family. Part of the 50S ribosomal subunit. Forms a cluster with proteins L3 and L19. In the 70S ribosome, L14 and L19 interact and together make contacts with the 16S rRNA in bridges B5 and B8.

Binds to 23S rRNA. Forms part of two intersubunit bridges in the 70S ribosome. The polypeptide is Large ribosomal subunit protein uL14 (Halalkalibacterium halodurans (strain ATCC BAA-125 / DSM 18197 / FERM 7344 / JCM 9153 / C-125) (Bacillus halodurans)).